Reading from the N-terminus, the 440-residue chain is 5-methylthioadenosine/S-adenosylhomocysteine deaminase (440 aa).

His-69 and His-71 together coordinate Zn(2+). Residues Glu-98 and His-190 each coordinate substrate. Zn(2+) is bound at residue His-217. Residues Glu-220 and Asp-305 each coordinate substrate. A Zn(2+)-binding site is contributed by Asp-305.

Belongs to the metallo-dependent hydrolases superfamily. MTA/SAH deaminase family. Requires Zn(2+) as cofactor.

It carries out the reaction S-adenosyl-L-homocysteine + H2O + H(+) = S-inosyl-L-homocysteine + NH4(+). The enzyme catalyses S-methyl-5'-thioadenosine + H2O + H(+) = S-methyl-5'-thioinosine + NH4(+). Functionally, catalyzes the deamination of 5-methylthioadenosine and S-adenosyl-L-homocysteine into 5-methylthioinosine and S-inosyl-L-homocysteine, respectively. Is also able to deaminate adenosine. This Desulfovibrio desulfuricans (strain ATCC 27774 / DSM 6949 / MB) protein is 5-methylthioadenosine/S-adenosylhomocysteine deaminase.